The primary structure comprises 391 residues: S-adenosylmethionine synthase (391 aa).

Residue His14 coordinates ATP. Residue Asp16 participates in Mg(2+) binding. Glu42 lines the K(+) pocket. Glu55 and Gln98 together coordinate L-methionine. Residues 98–108 are flexible loop; sequence QSADIAMGVDE. ATP-binding positions include 172 to 174, 238 to 239, Asp247, 253 to 254, Ala270, and Lys274; these read DGK, RF, and RK. Asp247 contributes to the L-methionine binding site. Lys278 is an L-methionine binding site.

The protein belongs to the AdoMet synthase family. In terms of assembly, homotetramer; dimer of dimers. Mg(2+) is required as a cofactor. K(+) serves as cofactor.

It is found in the cytoplasm. It catalyses the reaction L-methionine + ATP + H2O = S-adenosyl-L-methionine + phosphate + diphosphate. Its pathway is amino-acid biosynthesis; S-adenosyl-L-methionine biosynthesis; S-adenosyl-L-methionine from L-methionine: step 1/1. Functionally, catalyzes the formation of S-adenosylmethionine (AdoMet) from methionine and ATP. The overall synthetic reaction is composed of two sequential steps, AdoMet formation and the subsequent tripolyphosphate hydrolysis which occurs prior to release of AdoMet from the enzyme. The sequence is that of S-adenosylmethionine synthase from Clostridium acetobutylicum (strain ATCC 824 / DSM 792 / JCM 1419 / IAM 19013 / LMG 5710 / NBRC 13948 / NRRL B-527 / VKM B-1787 / 2291 / W).